Reading from the N-terminus, the 422-residue chain is Probable zinc-type alcohol dehydrogenase-like protein L498 (422 aa).

Residues cysteine 108, histidine 129, cysteine 160, cysteine 163, cysteine 166, cysteine 174, and cysteine 231 each contribute to the Zn(2+) site.

Zn(2+) serves as cofactor.

It is found in the host cytoplasm. The protein localises to the virion. This chain is Probable zinc-type alcohol dehydrogenase-like protein L498, found in Acanthamoeba polyphaga (Amoeba).